Consider the following 218-residue polypeptide: Uracil-DNA glycosylase (218 aa).

Asp60 (proton acceptor) is an active-site residue.

This sequence belongs to the uracil-DNA glycosylase (UDG) superfamily. UNG family.

It is found in the cytoplasm. The enzyme catalyses Hydrolyzes single-stranded DNA or mismatched double-stranded DNA and polynucleotides, releasing free uracil.. Excises uracil residues from the DNA which can arise as a result of misincorporation of dUMP residues by DNA polymerase or due to deamination of cytosine. This is Uracil-DNA glycosylase from Francisella philomiragia subsp. philomiragia (strain ATCC 25017 / CCUG 19701 / FSC 153 / O#319-036).